Consider the following 919-residue polypeptide: Transcriptional regulatory protein EDS1 (919 aa).

A disordered region spans residues methionine 1 to arginine 54. Residues serine 23–arginine 36 are compositionally biased toward polar residues. A compositionally biased stretch (basic and acidic residues) spans asparagine 37–threonine 46. A DNA-binding region (zn(2)-C6 fungal-type) is located at residues cysteine 56–cysteine 85. The interval alanine 297–serine 338 is disordered. The span at leucine 304–serine 317 shows a compositional bias: basic and acidic residues. The segment covering threonine 318–serine 338 has biased composition (polar residues).

As to quaternary structure, binds DNA in a sequence-specific manner.

It is found in the nucleus. The polypeptide is Transcriptional regulatory protein EDS1 (EDS1) (Saccharomyces cerevisiae (strain RM11-1a) (Baker's yeast)).